We begin with the raw amino-acid sequence, 140 residues long: uncharacterized protein (140 aa).

Its subcellular location is the mitochondrion. This is an uncharacterized protein from Homo sapiens (Human).